The following is a 287-amino-acid chain: Protease HtpX (287 aa).

A run of 2 helical transmembrane segments spans residues 4–24 (VFLL…VMSI) and 33–53 (GGLL…SLAI). Zn(2+) is bound at residue H139. E140 is a catalytic residue. Residue H143 participates in Zn(2+) binding. 2 helical membrane passes run 154 to 174 (LIQG…AGII) and 195 to 215 (GVVF…VAYF). E220 is a binding site for Zn(2+).

It belongs to the peptidase M48B family. Zn(2+) serves as cofactor.

It is found in the cell inner membrane. This is Protease HtpX from Shewanella denitrificans (strain OS217 / ATCC BAA-1090 / DSM 15013).